The primary structure comprises 293 residues: Acetylglutamate kinase (293 aa).

Residues 70–71 (GG), Arg-92, and Asn-186 each bind substrate.

It belongs to the acetylglutamate kinase family. ArgB subfamily.

The protein resides in the cytoplasm. It carries out the reaction N-acetyl-L-glutamate + ATP = N-acetyl-L-glutamyl 5-phosphate + ADP. The protein operates within amino-acid biosynthesis; L-arginine biosynthesis; N(2)-acetyl-L-ornithine from L-glutamate: step 2/4. Functionally, catalyzes the ATP-dependent phosphorylation of N-acetyl-L-glutamate. The chain is Acetylglutamate kinase from Parasynechococcus marenigrum (strain WH8102).